Reading from the N-terminus, the 381-residue chain is GDSL esterase/lipase At3g48460 (381 aa).

Positions 1-26 are cleaved as a signal peptide; it reads MSSSISPLLTTAISVAILLFSTISTA. The active-site Nucleophile is Ser45. Asn112, Asn140, and Asn258 each carry an N-linked (GlcNAc...) asparagine glycan. Catalysis depends on residues Asp344 and His347.

The protein belongs to the 'GDSL' lipolytic enzyme family.

It localises to the secreted. The polypeptide is GDSL esterase/lipase At3g48460 (Arabidopsis thaliana (Mouse-ear cress)).